The chain runs to 78 residues: MICOS complex subunit MIC10 (78 aa).

Serine 2 is subject to N-acetylserine. A helical membrane pass occupies residues 17 to 36 (AVVKIGTGFGLGIVFSLTFF). At 37 to 78 (KRRMWPLAFGSGMGLGMAYSNCQHDFQAPYLLHGKYVKEQEQ) the chain is on the mitochondrial intermembrane side.

It belongs to the MICOS complex subunit Mic10 family. Component of the mitochondrial contact site and cristae organizing system (MICOS) complex, composed of at least MICOS10/MIC10, CHCHD3/MIC19, CHCHD6/MIC25, APOOL/MIC27, IMMT/MIC60, APOO/MIC23/MIC26 and MICOS13/MIC13. This complex was also known under the names MINOS or MitOS complex. The MICOS complex associates with mitochondrial outer membrane proteins SAMM50, MTX1 and MTX2 (together described as components of the mitochondrial outer membrane sorting assembly machinery (SAM) complex) and DNAJC11, mitochondrial inner membrane protein TMEM11 and with HSPA9. The MICOS and SAM complexes together with DNAJC11 are part of a large protein complex spanning both membranes termed the mitochondrial intermembrane space bridging (MIB) complex. Interacts with IMMT/MIC60 and MICOS13/MIC13. Interacts with APOO/MIC23/MIC26 and APOOL/MIC27. Interacts with ARMC1.

The protein resides in the mitochondrion inner membrane. Functionally, component of the MICOS complex, a large protein complex of the mitochondrial inner membrane that plays crucial roles in the maintenance of crista junctions, inner membrane architecture, and formation of contact sites to the outer membrane. In Homo sapiens (Human), this protein is MICOS complex subunit MIC10.